Here is a 446-residue protein sequence, read N- to C-terminus: Scytalone dehydratase-like protein Arp1 (446 aa).

Tyr323 contacts substrate. Active-site residues include His358 and His383. A substrate-binding site is contributed by Asn404.

It belongs to the scytalone dehydratase family. As to quaternary structure, homotrimer. Each subunit contains an active site, located in the central part of the hydrophobic core of the monomer, which functions independently.

Scytalone dehydratase-like protein; part of the Pks2 gene cluster that mediates the formation of infectious structures (appressoria), enabling these fungi to kill insects faster. The product of the Pks2 gene cluster is different from the one of Pks1 and has still not been identified. The protein is Scytalone dehydratase-like protein Arp1 of Metarhizium acridum (strain CQMa 102).